A 176-amino-acid polypeptide reads, in one-letter code: Conjugal transfer protein TraF (176 aa).

The N-terminal stretch at 1-23 (MRHRRALLFLTGAAVFVSALTAA) is a signal peptide.

Belongs to the peptidase S26C family.

It is found in the periplasm. Functionally, involved in conjugal transfer of the plasmid. This is Conjugal transfer protein TraF (traF) from Agrobacterium tumefaciens (strain 15955).